The primary structure comprises 506 residues: Maturase K (506 aa).

Belongs to the intron maturase 2 family. MatK subfamily.

Its subcellular location is the plastid. The protein localises to the chloroplast. Functionally, usually encoded in the trnK tRNA gene intron. Probably assists in splicing its own and other chloroplast group II introns. This chain is Maturase K, found in Calluna vulgaris (Heather).